The primary structure comprises 186 residues: GMP synthase [glutamine-hydrolyzing] subunit A (186 aa).

One can recognise a Glutamine amidotransferase type-1 domain in the interval Ser-2–Tyr-186. The active-site Nucleophile is the Cys-76. Active-site residues include His-163 and Glu-165.

As to quaternary structure, heterodimer composed of a glutamine amidotransferase subunit (A) and a GMP-binding subunit (B).

The catalysed reaction is XMP + L-glutamine + ATP + H2O = GMP + L-glutamate + AMP + diphosphate + 2 H(+). It functions in the pathway purine metabolism; GMP biosynthesis; GMP from XMP (L-Gln route): step 1/1. Catalyzes the synthesis of GMP from XMP. The sequence is that of GMP synthase [glutamine-hydrolyzing] subunit A from Methanosphaera stadtmanae (strain ATCC 43021 / DSM 3091 / JCM 11832 / MCB-3).